Consider the following 320-residue polypeptide: Pyrroline-5-carboxylate reductase 2 (320 aa).

An N-acetylserine modification is found at Ser-2. NADP(+)-binding positions include 6–11 (IGAGQL) and Ser-34. Residues Ala-8, Gln-10, Leu-11, Ser-34, Glu-36, Asn-56, Val-70, Lys-71, and Ala-97 each coordinate NADPH. Residues Asn-56, 69-72 (AVKP), and 95-97 (CAA) each bind NADP(+). L-proline is bound at residue Glu-164. NADPH is bound at residue Asn-230. L-proline-binding residues include Ala-237 and Thr-238. Residues 298 to 320 (TTLTPTSSGKLLTRSPVPGGKKD) are disordered. Ser-304 is subject to Phosphoserine.

The protein belongs to the pyrroline-5-carboxylate reductase family. In terms of assembly, homodecamer; composed of 5 homodimers. Interacts with LTO1.

It localises to the cytoplasm. The protein localises to the mitochondrion. It catalyses the reaction L-proline + NADP(+) = (S)-1-pyrroline-5-carboxylate + NADPH + 2 H(+). The enzyme catalyses L-proline + NAD(+) = (S)-1-pyrroline-5-carboxylate + NADH + 2 H(+). It participates in amino-acid biosynthesis; L-proline biosynthesis; L-proline from L-glutamate 5-semialdehyde: step 1/1. Functionally, oxidoreductase that catalyzes the last step in proline biosynthesis, which corresponds to the reduction of pyrroline-5-carboxylate to L-proline using NAD(P)H. At physiologic concentrations, has higher specific activity in the presence of NADH. Involved in cellular response to oxidative stress. In some cell types, such as erythrocytes, its primary function may be the generation of NADP(+). The protein is Pyrroline-5-carboxylate reductase 2 (PYCR2) of Bos taurus (Bovine).